The following is a 957-amino-acid chain: Glycine dehydrogenase (decarboxylating) (957 aa).

Residue lysine 708 is modified to N6-(pyridoxal phosphate)lysine.

This sequence belongs to the GcvP family. In terms of assembly, the glycine cleavage system is composed of four proteins: P, T, L and H. Requires pyridoxal 5'-phosphate as cofactor.

The enzyme catalyses N(6)-[(R)-lipoyl]-L-lysyl-[glycine-cleavage complex H protein] + glycine + H(+) = N(6)-[(R)-S(8)-aminomethyldihydrolipoyl]-L-lysyl-[glycine-cleavage complex H protein] + CO2. Its function is as follows. The glycine cleavage system catalyzes the degradation of glycine. The P protein binds the alpha-amino group of glycine through its pyridoxal phosphate cofactor; CO(2) is released and the remaining methylamine moiety is then transferred to the lipoamide cofactor of the H protein. The polypeptide is Glycine dehydrogenase (decarboxylating) (Shigella dysenteriae serotype 1 (strain Sd197)).